Consider the following 145-residue polypeptide: Large ribosomal subunit protein mL43 (145 aa).

This sequence belongs to the mitochondrion-specific ribosomal protein mL43 family. In terms of assembly, component of the mitochondrial large ribosomal subunit (mt-LSU). Mature yeast 74S mitochondrial ribosomes consist of a small (37S) and a large (54S) subunit. The 37S small subunit contains a 15S ribosomal RNA (15S mt-rRNA) and at least 32 different proteins. The 54S large subunit contains a 21S rRNA (21S mt-rRNA) and at least 45 different proteins.

The protein localises to the mitochondrion. Its function is as follows. Component of the mitochondrial ribosome (mitoribosome), a dedicated translation machinery responsible for the synthesis of mitochondrial genome-encoded proteins, including at least some of the essential transmembrane subunits of the mitochondrial respiratory chain. The mitoribosomes are attached to the mitochondrial inner membrane and translation products are cotranslationally integrated into the membrane. Also has an extraribosomal function, being essential for mitochondrial genome integrity. May interact with MHR1 to take part in the mtDNA repair mechanism. In Schizosaccharomyces pombe (strain 972 / ATCC 24843) (Fission yeast), this protein is Large ribosomal subunit protein mL43 (mrpl51).